The following is a 400-amino-acid chain: CCA-adding enzyme (400 aa).

ATP-binding residues include glycine 28 and arginine 31. 2 residues coordinate CTP: glycine 28 and arginine 31. 2 residues coordinate Mg(2+): aspartate 41 and aspartate 43. ATP is bound by residues arginine 112, aspartate 155, arginine 158, arginine 161, and arginine 164. Residues arginine 112, aspartate 155, arginine 158, arginine 161, and arginine 164 each coordinate CTP.

It belongs to the tRNA nucleotidyltransferase/poly(A) polymerase family. Bacterial CCA-adding enzyme type 3 subfamily. Homodimer. Mg(2+) serves as cofactor.

It carries out the reaction a tRNA precursor + 2 CTP + ATP = a tRNA with a 3' CCA end + 3 diphosphate. It catalyses the reaction a tRNA with a 3' CCA end + 2 CTP + ATP = a tRNA with a 3' CCACCA end + 3 diphosphate. In terms of biological role, catalyzes the addition and repair of the essential 3'-terminal CCA sequence in tRNAs without using a nucleic acid template. Adds these three nucleotides in the order of C, C, and A to the tRNA nucleotide-73, using CTP and ATP as substrates and producing inorganic pyrophosphate. tRNA 3'-terminal CCA addition is required both for tRNA processing and repair. Also involved in tRNA surveillance by mediating tandem CCA addition to generate a CCACCA at the 3' terminus of unstable tRNAs. While stable tRNAs receive only 3'-terminal CCA, unstable tRNAs are marked with CCACCA and rapidly degraded. The sequence is that of CCA-adding enzyme from Staphylococcus haemolyticus (strain JCSC1435).